A 154-amino-acid polypeptide reads, in one-letter code: Small ribosomal subunit protein uS19B (154 aa).

Phosphoserine is present on Ser-63.

The protein belongs to the universal ribosomal protein uS19 family. As to quaternary structure, component of the small ribosomal subunit (SSU). Mature yeast ribosomes consist of a small (40S) and a large (60S) subunit. The 40S small subunit contains 1 molecule of ribosomal RNA (18S rRNA) and at least 33 different proteins. The large 60S subunit contains 3 rRNA molecules (25S, 5.8S and 5S rRNA) and at least 46 different proteins.

The protein resides in the cytoplasm. It is found in the nucleus. Its subcellular location is the nucleolus. Functionally, component of the ribosome, a large ribonucleoprotein complex responsible for the synthesis of proteins in the cell. The small ribosomal subunit (SSU) binds messenger RNAs (mRNAs) and translates the encoded message by selecting cognate aminoacyl-transfer RNA (tRNA) molecules. The large subunit (LSU) contains the ribosomal catalytic site termed the peptidyl transferase center (PTC), which catalyzes the formation of peptide bonds, thereby polymerizing the amino acids delivered by tRNAs into a polypeptide chain. The nascent polypeptides leave the ribosome through a tunnel in the LSU and interact with protein factors that function in enzymatic processing, targeting, and the membrane insertion of nascent chains at the exit of the ribosomal tunnel. uS19 is involved in the nuclear export of the small ribosomal subunit precursor. Has a role in the late stage of the assembly of pre-40S particles within the nucleus and controls their export to the cytoplasm. The chain is Small ribosomal subunit protein uS19B (rps1502) from Schizosaccharomyces pombe (strain 972 / ATCC 24843) (Fission yeast).